The sequence spans 202 residues: Matrix protein (202 aa).

The PPXY motif signature appears at 35-38 (PPEY). The segment at 115-151 (KLRRTLIFQWAESHGPLEGEELEYSQEITWDDEAEFV) is essential for glycoprotein binding.

The protein belongs to the lyssavirus matrix protein family. As to quaternary structure, homomultimer. Interacts with nucleoprotein and with the cytoplasmic domain of glycoprotein.

The protein resides in the virion membrane. It is found in the host endomembrane system. In terms of biological role, plays a major role in assembly and budding of virion. Completely covers the ribonucleoprotein coil and keep it in condensed bullet-shaped form. Inhibits viral transcription and stimulates replication. Plays a major role in early induction of TRAIL-mediated apoptosis in infected neurons. This is Matrix protein (M) from Mokola virus (MOKV).